Reading from the N-terminus, the 410-residue chain is Arginine deiminase (410 aa).

The active-site Amidino-cysteine intermediate is the Cys400.

The protein belongs to the arginine deiminase family.

The protein resides in the cytoplasm. It carries out the reaction L-arginine + H2O = L-citrulline + NH4(+). Its pathway is amino-acid degradation; L-arginine degradation via ADI pathway; carbamoyl phosphate from L-arginine: step 1/2. The sequence is that of Arginine deiminase (arcA) from Borreliella burgdorferi (strain ATCC 35210 / DSM 4680 / CIP 102532 / B31) (Borrelia burgdorferi).